The sequence spans 94 residues: Prepro-gonadotropin-releasing hormone-like protein (94 aa).

Positions 1–21 (MNACILLTTLVTMITIEKVQG) are cleaved as a signal peptide.

The protein resides in the secreted. Neuropeptide involved in reproduction. May be an important hormone in the regulation of gonadal maturation. This chain is Prepro-gonadotropin-releasing hormone-like protein, found in Ruditapes philippinarum (Japanese carpet shell).